A 233-amino-acid polypeptide reads, in one-letter code: Adenylyl cyclase-associated protein 1 (233 aa).

At Tyr-14 the chain carries Phosphotyrosine. Position 17 is a phosphoserine (Ser-17). 2 disordered regions span residues 43–71 (VDKX…PSAL) and 91–129 (DEKT…KPVT). Positions 53-64 (LSGLPSGPSAGS) are enriched in low complexity. Lys-101 is subject to N6-methyllysine. Phosphoserine is present on residues Ser-104, Ser-115, Ser-122, and Ser-124. Lys-151 is covalently cross-linked (Glycyl lysine isopeptide (Lys-Gly) (interchain with G-Cter in SUMO1)). Positions 173–221 (VPXISINKXDGRHIYLSKNSLDCEIVSAKSSEMNVLIPTEGGDFNEFPV) constitute a C-CAP/cofactor C-like domain.

Belongs to the CAP family. In terms of assembly, homodimer. Binds actin monomers.

The protein resides in the cell membrane. Functionally, directly regulates filament dynamics and has been implicated in a number of complex developmental and morphological processes, including mRNA localization and the establishment of cell polarity. In Sus scrofa (Pig), this protein is Adenylyl cyclase-associated protein 1 (CAP1).